The primary structure comprises 719 residues: KIIVEKDPVRTSFEKWAQPGHFSKTLAKGPNTTTWIWNLHADAHDFDSHTNDLEDISRKIFSAHFGQLSIIFIWLSGMYFHGARFSNYEAWLSDPTHIKPSAQVVWPIVGQEILNGDVGGGFQGIQITSGFFQLWRASGITNELQLYCTAIGALIFAGLMLFAGWFHYHKAAPKLAWFQDVESMLNHHLAGLLGLGSLGWAGHQVHVSLPINQLLDSGVDPREIPLPHEFILNRDLLAQLYPSFSEGLTPFFNLEWSKYSDFLTFRGGLNPVTGGLWLTDTAHHHIAIAVLFLIAGHMYRTNWGIGHSIKEILEAHKGPFTGEGHRGLFEILTSSWHAQLAVNLAMLGSLTIIVAHHMYAMPPYPYLATDYGTQLSLFTHHMWIGGFLVVGAAAHAAIFMVRDYDPSTQYNNLLDRVIRHRDAIISHLNWVCIFLGFHSFGLYIHNDTMSALGRPQDMFSDTAIQLQPIFAQWIQNTHALAPSLTAPNATASTSLTWGGGDLVSVGGRVALLPIPLGTADFLVHHIHAFTIHVTVLILLKGVLFARSSRLIPDKANLGFRFPCDGPGRGGTCQVSAWDHVFLGLFWMYNSISVVIFHFSWKMQSDVWGSINEQGVISHITGGNFAQSATTINGWLRDFLWAQASQVIQSYGSSLSAYGLLFLGAHFVWAFSLMFLFSGRGYWQELIESILWAHNKLKVAPAIQPRALSIVQGRAVGVAH.

8 helical membrane-spanning segments follow: residues 60–83, 146–169, 185–209, 281–299, 336–359, 375–401, 423–445, and 521–539; these read IFSAHFGQLSIIFIWLSGMYFHGA, LYCTAIGALIFAGLMLFAGWFHYH, LNHHLAGLLGLGSLGWAGHQVHVSL, TAHHHIAIAVLFLIAGHMY, WHAQLAVNLAMLGSLTIIVAHHMY, LSLFTHHMWIGGFLVVGAAAHAAIFMV, AIISHLNWVCIFLGFHSFGLYIH, and FLVHHIHAFTIHVTVLILL. [4Fe-4S] cluster contacts are provided by Cys-563 and Cys-572. The next 2 membrane-spanning stretches (helical) occupy residues 579–600 and 654–676; these read HVFLGLFWMYNSISVVIFHFSW and LSAYGLLFLGAHFVWAFSLMFLF. His-665 contributes to the chlorophyll a' binding site. Chlorophyll a is bound by residues Met-673 and Tyr-681. Trp-682 is a phylloquinone binding site. The helical transmembrane segment at 714-719 threads the bilayer; sequence AVGVAH.

Belongs to the PsaA/PsaB family. In terms of assembly, the PsaA/B heterodimer binds the P700 chlorophyll special pair and subsequent electron acceptors. PSI consists of a core antenna complex that captures photons, and an electron transfer chain that converts photonic excitation into a charge separation. The eukaryotic PSI reaction center is composed of at least 11 subunits. P700 is a chlorophyll a/chlorophyll a' dimer, A0 is one or more chlorophyll a, A1 is one or both phylloquinones and FX is a shared 4Fe-4S iron-sulfur center. serves as cofactor.

The protein localises to the plastid. It is found in the chloroplast thylakoid membrane. It catalyses the reaction reduced [plastocyanin] + hnu + oxidized [2Fe-2S]-[ferredoxin] = oxidized [plastocyanin] + reduced [2Fe-2S]-[ferredoxin]. In terms of biological role, psaA and PsaB bind P700, the primary electron donor of photosystem I (PSI), as well as the electron acceptors A0, A1 and FX. PSI is a plastocyanin-ferredoxin oxidoreductase, converting photonic excitation into a charge separation, which transfers an electron from the donor P700 chlorophyll pair to the spectroscopically characterized acceptors A0, A1, FX, FA and FB in turn. Oxidized P700 is reduced on the lumenal side of the thylakoid membrane by plastocyanin. This chain is Photosystem I P700 chlorophyll a apoprotein A1, found in Equisetum palustre (Marsh horsetail).